The chain runs to 112 residues: Prothymosin alpha (112 aa).

N-acetylmethionine is present on Met-1. The disordered stretch occupies residues 1–112 (MSDAAVDTSS…KKQKKTDEDD (112 aa)). Ser-2 is modified (N-acetylserine; in Prothymosin alpha, N-terminally processed). Residue Ser-2 is modified to Phosphoserine. The residue at position 8 (Thr-8) is a Phosphothreonine. Residues Ser-9 and Ser-10 each carry the phosphoserine modification. 2 positions are modified to phosphothreonine: Thr-13 and Thr-14. Residues 13 to 31 (TTKDLKEKKEVVEEAENGR) are compositionally biased toward basic and acidic residues. At Lys-15 the chain carries N6-acetyllysine; alternate. N6-succinyllysine; alternate is present on Lys-15. The segment covering 43–84 (ENGEQEADNEVDEEEEEGGEEEEEEEEGDGEEEDGDEDEEAE) has biased composition (acidic residues). Over residues 101-112 (ETKKQKKTDEDD) the composition is skewed to basic and acidic residues. Thr-102 bears the Phosphothreonine mark. Lys-103 bears the N6-acetyllysine; alternate mark. Lys-103 participates in a covalent cross-link: Glycyl lysine isopeptide (Lys-Gly) (interchain with G-Cter in SUMO2); alternate. Thr-108 carries the phosphothreonine modification.

It belongs to the pro/parathymosin family. Interacts with NUPR1; regulates apoptotic process. Post-translationally, covalently linked to a small RNA of about 20 nucleotides.

The protein localises to the nucleus. Functionally, prothymosin alpha may mediate immune function by conferring resistance to certain opportunistic infections. The chain is Prothymosin alpha (Ptma) from Rattus norvegicus (Rat).